The sequence spans 138 residues: Ribosomal RNA large subunit methyltransferase H (138 aa).

S-adenosyl-L-methionine contacts are provided by residues leucine 57, glycine 86, and 105–110; that span reads LSPLTF.

The protein belongs to the RNA methyltransferase RlmH family. As to quaternary structure, homodimer.

The protein resides in the cytoplasm. The catalysed reaction is pseudouridine(1915) in 23S rRNA + S-adenosyl-L-methionine = N(3)-methylpseudouridine(1915) in 23S rRNA + S-adenosyl-L-homocysteine + H(+). Functionally, specifically methylates the pseudouridine at position 1915 (m3Psi1915) in 23S rRNA. In Prochlorococcus marinus (strain MIT 9312), this protein is Ribosomal RNA large subunit methyltransferase H.